The primary structure comprises 85 residues: MAHKKGASSSRNGRDSNAQRLGVKRFGGQVVKAGEIIVRQRGTHFHPGDGVGRGKDDTLFALQPGSVQFGTRRGRKVIDVVSVDA.

Residues 1 to 21 (MAHKKGASSSRNGRDSNAQRL) are disordered. The span at 7–19 (ASSSRNGRDSNAQ) shows a compositional bias: polar residues.

The protein belongs to the bacterial ribosomal protein bL27 family.

This chain is Large ribosomal subunit protein bL27, found in Beutenbergia cavernae (strain ATCC BAA-8 / DSM 12333 / CCUG 43141 / JCM 11478 / NBRC 16432 / NCIMB 13614 / HKI 0122).